Reading from the N-terminus, the 267-residue chain is Undecaprenyl-diphosphatase (267 aa).

8 helical membrane passes run 1-21 (MTYFEAFFLALLQGFTEFLPI), 39-59 (QGLAFDVAVHVGTLAAVVIYF), 83-103 (SNLAWLIVLATIPAALFGLLF), 111-131 (LRSAWVIAATTIVFGLLLWWV), 149-169 (ALFLGIAQAMAMIPGTSRSGI), 189-209 (FLMSIPIITLAGSYLGLKLAM), 218-238 (LLSTGVIVSFISAYICIHFFL), and 246-266 (MMPFVIYRILLGSSLLVWLAL).

It belongs to the UppP family.

The protein localises to the cell inner membrane. The enzyme catalyses di-trans,octa-cis-undecaprenyl diphosphate + H2O = di-trans,octa-cis-undecaprenyl phosphate + phosphate + H(+). Catalyzes the dephosphorylation of undecaprenyl diphosphate (UPP). Confers resistance to bacitracin. This Aliivibrio fischeri (strain MJ11) (Vibrio fischeri) protein is Undecaprenyl-diphosphatase.